A 112-amino-acid chain; its full sequence is Putative iron-sulfur cluster insertion protein ErpA (112 aa).

Iron-sulfur cluster-binding residues include C40, C104, and C106.

Belongs to the HesB/IscA family. In terms of assembly, homodimer. Iron-sulfur cluster serves as cofactor.

Functionally, required for insertion of 4Fe-4S clusters. This chain is Putative iron-sulfur cluster insertion protein ErpA, found in Neisseria gonorrhoeae (strain ATCC 700825 / FA 1090).